Consider the following 738-residue polypeptide: Photosystem I P700 chlorophyll a apoprotein A2 (738 aa).

8 consecutive transmembrane segments (helical) span residues 46 to 69 (LFST…FHIA), 135 to 158 (LYQG…LHLQ), 175 to 199 (LNHH…HVAI), 273 to 291 (IAHH…GHMY), 333 to 356 (LHFQ…QHMY), 372 to 398 (AALY…IFFI), 420 to 442 (AIIS…LYVH), and 521 to 539 (FLVH…LILV). 2 residues coordinate [4Fe-4S] cluster: C563 and C572. 2 helical membrane passes run 579–600 (AFYL…YWHW) and 647–669 (LAVW…MFLI). 3 residues coordinate chlorophyll a: H658, M666, and Y674. A phylloquinone-binding site is contributed by W675. The helical transmembrane segment at 711–731 (VVGLAHFTIGYILTYAAFLIA) threads the bilayer.

It belongs to the PsaA/PsaB family. In terms of assembly, the PsaA/B heterodimer binds the P700 chlorophyll special pair and subsequent electron acceptors. PSI consists of a core antenna complex that captures photons, and an electron transfer chain that converts photonic excitation into a charge separation. The cyanobacterial PSI reaction center is composed of one copy each of PsaA,B,C,D,E,F,I,J,K,L,M and X, and forms trimeric complexes. PSI electron transfer chain: 5 chlorophyll a, 1 chlorophyll a', 2 phylloquinones and 3 4Fe-4S clusters. PSI core antenna: 90 chlorophyll a, 22 carotenoids, 3 phospholipids and 1 galactolipid. P700 is a chlorophyll a/chlorophyll a' dimer, A0 is one or more chlorophyll a, A1 is one or both phylloquinones and FX is a shared 4Fe-4S iron-sulfur center. serves as cofactor.

It is found in the cellular thylakoid membrane. The catalysed reaction is reduced [plastocyanin] + hnu + oxidized [2Fe-2S]-[ferredoxin] = oxidized [plastocyanin] + reduced [2Fe-2S]-[ferredoxin]. In terms of biological role, psaA and PsaB bind P700, the primary electron donor of photosystem I (PSI), as well as the electron acceptors A0, A1 and FX. PSI is a plastocyanin/cytochrome c6-ferredoxin oxidoreductase, converting photonic excitation into a charge separation, which transfers an electron from the donor P700 chlorophyll pair to the spectroscopically characterized acceptors A0, A1, FX, FA and FB in turn. Oxidized P700 is reduced on the lumenal side of the thylakoid membrane by plastocyanin or cytochrome c6. The protein is Photosystem I P700 chlorophyll a apoprotein A2 of Synechococcus sp. (strain WH7803).